Reading from the N-terminus, the 206-residue chain is dITP/XTP pyrophosphatase (206 aa).

Residue 10–15 (SGNAGK) coordinates substrate. 2 residues coordinate Mg(2+): Glu-40 and Asp-69. Residue Asp-69 is the Proton acceptor of the active site. Residues Ser-70, 148–151 (FGYD), Lys-171, and 176–177 (HR) contribute to the substrate site.

It belongs to the HAM1 NTPase family. As to quaternary structure, homodimer. Mg(2+) is required as a cofactor.

The enzyme catalyses XTP + H2O = XMP + diphosphate + H(+). The catalysed reaction is dITP + H2O = dIMP + diphosphate + H(+). It carries out the reaction ITP + H2O = IMP + diphosphate + H(+). Functionally, pyrophosphatase that catalyzes the hydrolysis of nucleoside triphosphates to their monophosphate derivatives, with a high preference for the non-canonical purine nucleotides XTP (xanthosine triphosphate), dITP (deoxyinosine triphosphate) and ITP. Seems to function as a house-cleaning enzyme that removes non-canonical purine nucleotides from the nucleotide pool, thus preventing their incorporation into DNA/RNA and avoiding chromosomal lesions. The polypeptide is dITP/XTP pyrophosphatase (Synechococcus sp. (strain CC9311)).